We begin with the raw amino-acid sequence, 496 residues long: Cytochrome P450 71D180 (496 aa).

The chain crosses the membrane as a helical; Signal-anchor for type II membrane protein span at residues Met1–Met21. A heme-binding site is contributed by Cys435. The segment at Met471–Ser496 is disordered.

It belongs to the cytochrome P450 family. Heme serves as cofactor. As to expression, mostly expressed in flowers and stems, and, to a lower extent, in leaves.

The protein localises to the membrane. The enzyme catalyses gamma-terpinene + 2 reduced [NADPH--hemoprotein reductase] + 2 O2 = carvacrol + 2 oxidized [NADPH--hemoprotein reductase] + 3 H2O + 2 H(+). It carries out the reaction (4S)-limonene + reduced [NADPH--hemoprotein reductase] + O2 = (1S,5R)-carveol + oxidized [NADPH--hemoprotein reductase] + H2O + H(+). The catalysed reaction is (4R)-limonene + reduced [NADPH--hemoprotein reductase] + O2 = (1R,5S)-carveol + oxidized [NADPH--hemoprotein reductase] + H2O + H(+). The protein operates within secondary metabolite biosynthesis; terpenoid biosynthesis. Functionally, involved in the biosynthesis of phenolic monoterpenes natural products thymol and carvacrol which have a broad range of biological activities acting as antimicrobial compounds, insecticides, antioxidants and pharmaceutical agents. Catalyzes the C2-hydroxylation of gamma-terpinene to produce carvacrol. Also mediates the C6-hydroxylation of (4S)-limonene and (4R)-limonene to form carveol. The polypeptide is Cytochrome P450 71D180 (Origanum vulgare (Wild marjoram)).